A 1407-amino-acid polypeptide reads, in one-letter code: DNA-directed RNA polymerase subunit beta' (1407 aa).

Residues Cys70, Cys72, Cys85, and Cys88 each coordinate Zn(2+). 3 residues coordinate Mg(2+): Asp460, Asp462, and Asp464. Zn(2+) contacts are provided by Cys814, Cys888, Cys895, and Cys898. Lys972 carries the N6-acetyllysine modification.

This sequence belongs to the RNA polymerase beta' chain family. In terms of assembly, the RNAP catalytic core consists of 2 alpha, 1 beta, 1 beta' and 1 omega subunit. When a sigma factor is associated with the core the holoenzyme is formed, which can initiate transcription. The cofactor is Mg(2+). Zn(2+) is required as a cofactor.

It carries out the reaction RNA(n) + a ribonucleoside 5'-triphosphate = RNA(n+1) + diphosphate. Functionally, DNA-dependent RNA polymerase catalyzes the transcription of DNA into RNA using the four ribonucleoside triphosphates as substrates. This is DNA-directed RNA polymerase subunit beta' from Shigella sonnei (strain Ss046).